Reading from the N-terminus, the 149-residue chain is UPF0260 protein Pmen_1776 (149 aa).

The protein belongs to the UPF0260 family.

The chain is UPF0260 protein Pmen_1776 from Ectopseudomonas mendocina (strain ymp) (Pseudomonas mendocina).